The sequence spans 458 residues: DNA repair protein RadA (458 aa).

Residues 11-28 (CNDCGAEFSRWQGQCSAC) form a C4-type zinc finger. 100–107 (GHPGAGKS) contacts ATP. The RadA KNRFG motif motif lies at 256-260 (KNRFG). The tract at residues 355–458 (DVFVNVVGGV…TDALAVLDNL (104 aa)) is lon-protease-like.

The protein belongs to the RecA family. RadA subfamily.

DNA-dependent ATPase involved in processing of recombination intermediates, plays a role in repairing DNA breaks. Stimulates the branch migration of RecA-mediated strand transfer reactions, allowing the 3' invading strand to extend heteroduplex DNA faster. Binds ssDNA in the presence of ADP but not other nucleotides, has ATPase activity that is stimulated by ssDNA and various branched DNA structures, but inhibited by SSB. Does not have RecA's homology-searching function. This chain is DNA repair protein RadA, found in Haemophilus influenzae (strain ATCC 51907 / DSM 11121 / KW20 / Rd).